The chain runs to 108 residues: Zinc metalloproteinase/disintegrin (108 aa).

A Peptidase M12B domain is found at 1-19; sequence NEYQTYLTDRNPQCILNEP. Residues 20 to 35 constitute a propeptide that is removed on maturation; that stretch reads LRTDTVSTPVSGNELL. One can recognise a Disintegrin domain in the interval 27–108; it reads TPVSGNELLE…ADCPRNGFYG (82 aa). Disulfide bonds link cysteine 41-cysteine 56, cysteine 43-cysteine 51, cysteine 50-cysteine 73, cysteine 64-cysteine 70, cysteine 69-cysteine 94, and cysteine 82-cysteine 101. Positions 86–88 match the Cell attachment site; atypical (KGD) motif; the sequence is KGD.

This sequence belongs to the venom metalloproteinase (M12B) family. P-II subfamily. P-IIa sub-subfamily. Monomeric (disintegrin). Zn(2+) serves as cofactor. Expressed by the venom gland.

Its subcellular location is the secreted. Impairs hemostasis in the envenomed animal. Functionally, inhibits platelet aggregation induced by ADP, thrombin, platelet-activating factor and collagen. Acts by inhibiting fibrinogen interaction with platelet receptors GPIIb/GPIIIa (ITGA2B/ITGB3). The chain is Zinc metalloproteinase/disintegrin from Gloydius brevicauda (Korean slamosa snake).